Here is a 1018-residue protein sequence, read N- to C-terminus: Probable inorganic carbon transporter subunit DabA 2 (1018 aa).

Residues Cys-489, Asp-491, His-674, and Cys-689 each coordinate Zn(2+).

It belongs to the inorganic carbon transporter (TC 9.A.2) DabA family. In terms of assembly, forms a complex with DabB. The cofactor is Zn(2+).

The protein resides in the cell inner membrane. Part of an energy-coupled inorganic carbon pump. The sequence is that of Probable inorganic carbon transporter subunit DabA 2 from Sorangium cellulosum (strain So ce56) (Polyangium cellulosum (strain So ce56)).